The chain runs to 124 residues: uncharacterized protein (124 aa).

The helical transmembrane segment at 2-22 (AIIIAIIAAVIVIAALITFNV) threads the bilayer. A disordered region spans residues 24–124 (NASPGPEKQE…ALLSMKNKKK (101 aa)). Basic and acidic residues-rich tracts occupy residues 30-58 (EKQE…RAAE), 67-81 (DSPK…DDIY), and 89-113 (KHSD…RSYR).

It is found in the membrane. This is an uncharacterized protein from Bacillus subtilis (strain 168).